The chain runs to 92 residues: CRISPR-associated endoribonuclease Cas2 3 (92 aa).

Residue D9 participates in Mg(2+) binding.

The protein belongs to the CRISPR-associated endoribonuclease Cas2 protein family. In terms of assembly, homodimer, forms a heterotetramer with a Cas1 homodimer. It depends on Mg(2+) as a cofactor.

Functionally, CRISPR (clustered regularly interspaced short palindromic repeat), is an adaptive immune system that provides protection against mobile genetic elements (viruses, transposable elements and conjugative plasmids). CRISPR clusters contain sequences complementary to antecedent mobile elements and target invading nucleic acids. CRISPR clusters are transcribed and processed into CRISPR RNA (crRNA). Functions as a ssRNA-specific endoribonuclease. Involved in the integration of spacer DNA into the CRISPR cassette. This Synechocystis sp. (strain ATCC 27184 / PCC 6803 / Kazusa) protein is CRISPR-associated endoribonuclease Cas2 3.